Here is a 518-residue protein sequence, read N- to C-terminus: Homoserine O-acetyltransferase (518 aa).

Residues 69 to 468 (NVMVICHALT…DSPEGHDAFL (400 aa)) enclose the AB hydrolase-1 domain. Ser-182 is an active-site residue. The Nucleophile role is filled by Ser-182. Residues 267-365 (RFGRNIPDPS…PNSVSDPFRP (99 aa)) form a disordered region. The span at 290 to 303 (PAEEHYDIHNEGFR) shows a compositional bias: basic and acidic residues. Residues 310 to 341 (RSSTTTSDAPPSPTRTSSTSSTDAITPASTTP) are compositionally biased toward low complexity. Residues Asp-435 and His-464 contribute to the active site.

It belongs to the AB hydrolase superfamily. MetX family.

It catalyses the reaction L-homoserine + acetyl-CoA = O-acetyl-L-homoserine + CoA. Its pathway is amino-acid biosynthesis; L-methionine biosynthesis via de novo pathway; O-acetyl-L-homoserine from L-homoserine: step 1/1. Functionally, commits homoserine to the methionine biosynthesis pathway by catalyzing its O-acetylation. The polypeptide is Homoserine O-acetyltransferase (MET2) (Ascobolus immersus).